Here is a 253-residue protein sequence, read N- to C-terminus: Phycobilisome rod-core linker polypeptide CpcG4 (253 aa).

A PBS-linker domain is found at 11 to 191 (SSQNHRVTSF…DFQEKAGTVQ (181 aa)).

It belongs to the phycobilisome linker protein family. In terms of assembly, part of the phycobilisome, a hemidiscoidal structure that is composed of two distinct substructures: a core complex and a number of rods radiating from the core.

It localises to the cellular thylakoid membrane. Rod-core linker protein required for attachment of phycocyanin to allophycocyanin in cores of phycobilisomes. In terms of biological role, linker polypeptides determine the state of aggregation and the location of the disk-shaped phycobiliprotein units within the phycobilisome and modulate their spectroscopic properties in order to mediate a directed and optimal energy transfer. The sequence is that of Phycobilisome rod-core linker polypeptide CpcG4 from Nostoc sp. (strain PCC 7120 / SAG 25.82 / UTEX 2576).